The following is a 105-amino-acid chain: Class I hydrophobin 1 (105 aa).

An N-terminal signal peptide occupies residues 1-18 (MAFIKSLLIASVAAVAFA). Intrachain disulfides connect cysteine 42–cysteine 83, cysteine 50–cysteine 76, cysteine 51–cysteine 62, and cysteine 84–cysteine 100.

It belongs to the fungal hydrophobin family. Self-assembles to form functional amyloid fibrils called rodlets. Self-assembly into fibrillar rodlets occurs spontaneously at hydrophobic:hydrophilic interfaces and the rodlets further associate laterally to form amphipathic monolayers.

Its subcellular location is the secreted. It is found in the cell wall. Functionally, aerial growth, conidiation, and dispersal of filamentous fungi in the environment rely upon a capability of their secreting small amphipathic proteins called hydrophobins (HPBs) with low sequence identity. Class I can self-assemble into an outermost layer of rodlet bundles on aerial cell surfaces, conferring cellular hydrophobicity that supports fungal growth, development and dispersal; whereas Class II form highly ordered films at water-air interfaces through intermolecular interactions but contribute nothing to the rodlet structure. The polypeptide is Class I hydrophobin 1 (Davidiella tassiana (Mycosphaerella tassiana)).